The chain runs to 487 residues: Chromosomal replication initiator protein DnaA (487 aa).

Residues 1-92 are domain I, interacts with DnaA modulators; it reads MTIKGGVVSQ…SELWTANDAT (92 aa). Residues 92–144 form a domain II region; the sequence is TGRRLDLKSRLEFESVGGAGYEAKAEPIEIVLPVSSDVPALAPTNGSKPSPVQ. Positions 145–367 are domain III, AAA+ region; the sequence is GLQERFTFDT…GALNTLSARA (223 aa). ATP contacts are provided by glycine 189, glycine 191, lysine 192, and threonine 193. Residues 368–487 form a domain IV, binds dsDNA region; that stretch reads GEGVSRLTLE…LETITRKLRG (120 aa).

It belongs to the DnaA family. As to quaternary structure, oligomerizes as a right-handed, spiral filament on DNA at oriC.

The protein localises to the cytoplasm. Its function is as follows. Plays an essential role in the initiation and regulation of chromosomal replication. ATP-DnaA binds to the origin of replication (oriC) to initiate formation of the DNA replication initiation complex once per cell cycle. Binds the DnaA box (a 9 base pair repeat at the origin) and separates the double-stranded (ds)DNA. Forms a right-handed helical filament on oriC DNA; dsDNA binds to the exterior of the filament while single-stranded (ss)DNA is stabiized in the filament's interior. The ATP-DnaA-oriC complex binds and stabilizes one strand of the AT-rich DNA unwinding element (DUE), permitting loading of DNA polymerase. After initiation quickly degrades to an ADP-DnaA complex that is not apt for DNA replication. Binds acidic phospholipids. The sequence is that of Chromosomal replication initiator protein DnaA from Caulobacter sp. (strain K31).